Consider the following 125-residue polypeptide: Nascent polypeptide-associated complex protein (125 aa).

The NAC-A/B domain occupies 9–76; that stretch reads PRMMKQMQKM…SKNTSKTAEK (68 aa).

This sequence belongs to the NAC-alpha family. In terms of assembly, homodimer. Interacts with the ribosome. Binds ribosomal RNA.

Contacts the emerging nascent chain on the ribosome. This chain is Nascent polypeptide-associated complex protein, found in Methanococcus vannielii (strain ATCC 35089 / DSM 1224 / JCM 13029 / OCM 148 / SB).